The following is a 358-amino-acid chain: CCAAT/enhancer-binding protein alpha (358 aa).

The segment at 1-55 (MESADFYEAEPRPPMSSHLQSPPHAPSSAAFGFPRGAGPAQPPAPPAAPEPLGGI) is disordered. The required to repress E2F1:TFDP1-mediated transcription, to inhibit cell cycle and to induce adipocyte differentiation stretch occupies residues 1–70 (MESADFYEAE…SIDISAYIDP (70 aa)). The segment covering 29–39 (AAFGFPRGAGP) has biased composition (low complexity). A compositionally biased stretch (pro residues) spans 40-49 (AQPPAPPAAP). Residues 54 to 72 (GICEHETSIDISAYIDPAA) are required for interaction with TRIB1. Residues 128–204 (PPGYGCAAAG…HPPPAHLAAP (77 aa)) form a required to induce adipocyte differentiation region. The residue at position 161 (Lys-161) is an N6-acetyllysine; alternate. Residue Lys-161 forms a Glycyl lysine isopeptide (Lys-Gly) (interchain with G-Cter in SUMO2); alternate linkage. 2 disordered regions span residues 178-201 (LFPY…PAHL) and 217-291 (TMHL…RRER). Pro residues-rich tracts occupy residues 181–199 (YQPP…PPPA) and 224–238 (HPTP…PHPA). Residues 182–198 (QPPPPPPPSHPHPHPPP) are required to functionally cooperate with SREBF1 in promoter activation. Position 190 is a phosphoserine (Ser-190). 2 positions are modified to phosphothreonine; by GSK3: Thr-226 and Thr-230. Ser-234 carries the phosphoserine; by GSK3 modification. Positions 239–259 (PALGAAGLPGPGSALKGLGAA) are enriched in low complexity. Residues 244–358 (AGLPGPGSAL…SLVKAMGNCA (115 aa)) are interaction with FOXO1. The segment covering 276-291 (KSVDKNSNEYRVRRER) has biased composition (basic and acidic residues). A bZIP domain is found at 282-345 (SNEYRVRRER…DTLRGIFRQL (64 aa)). A DNA-binding region spans residues 285–300 (YRVRRERNNIAVRKSR). The interval 286–313 (RVRRERNNIAVRKSRDKAKQRNVETQQK) is basic motif. Residues 317–345 (LTSDNDRLRKRVEQLSRELDTLRGIFRQL) are leucine-zipper.

The protein belongs to the bZIP family. C/EBP subfamily. As to quaternary structure, binds DNA as a homodimer and as a heterodimer. Can form stable heterodimers with CEBPB, CEBPD, CEBPE and CEBPG. Interacts with PRDM16. Interacts with UBN1. Interacts with ZNF638; this interaction increases transcriptional activation. Interacts with the complex TFDP2:E2F1; the interaction prevents CEBPA binding to target gene promoters and represses its transcriptional activity. Interacts with RB1. Interacts (when phosphorylated at Ser-190) with CDK2, CDK4, E2F4 and SMARCA2. Interacts with SREBPF1. Interacts with FOXO1 (via the Fork-head domain); the interaction increases when FOXO1 is deacetylated. Interacts with SIX1. Interacts (via recognition sequence) with TRIB1. Interacts (via bZIP domain) with OVOL2 (via zinc-finger domains); the interaction inhibits the transcription factor activity of CEBPA and is required to repress adipogenesis. Interacts with TAF1A and UBTF. In terms of assembly, interacts with TAF1A and UBTF. Interacts with NPM1. As to quaternary structure, (Microbial infection) Interacts with HBV protein X. (Microbial infection) Interacts with Epstein-Barr virus lytic switch protein BZLF1; this interaction induces G1 cell cycle arrest. Phosphorylation at Ser-190 is required for interaction with CDK2, CDK4 and SWI/SNF complex leading to cell cycle inhibition. Dephosphorylated at Ser-190 by protein phosphatase 2A (PP2A) through PI3K/AKT signaling pathway regulation. Phosphorylation at Thr-226 and Thr-230 by GSK3 is constitutive in adipose tissue and lung. In liver, both Thr-226 and Thr-230 are phosphorylated only during feeding but not during fasting. Phosphorylation of the GSK3 consensus sites selectively decreases transactivation activity on IRE-controlled promoters. In terms of processing, sumoylated, sumoylation blocks the inhibitory effect on cell proliferation by disrupting the interaction with SMARCA2. Post-translationally, ubiquitinated by COP1 upon interaction with TRIB1.

It is found in the nucleus. The protein resides in the nucleolus. In terms of biological role, transcription factor that coordinates proliferation arrest and the differentiation of myeloid progenitors, adipocytes, hepatocytes, and cells of the lung and the placenta. Binds directly to the consensus DNA sequence 5'-T[TG]NNGNAA[TG]-3' acting as an activator on distinct target genes. During early embryogenesis, plays essential and redundant functions with CEBPB. Essential for the transition from common myeloid progenitors (CMP) to granulocyte/monocyte progenitors (GMP). Critical for the proper development of the liver and the lung. Necessary for terminal adipocyte differentiation, is required for postnatal maintenance of systemic energy homeostasis and lipid storage. To regulate these different processes at the proper moment and tissue, interplays with other transcription factors and modulators. Down-regulates the expression of genes that maintain cells in an undifferentiated and proliferative state through E2F1 repression, which is critical for its ability to induce adipocyte and granulocyte terminal differentiation. Reciprocally E2F1 blocks adipocyte differentiation by binding to specific promoters and repressing CEBPA binding to its target gene promoters. Proliferation arrest also depends on a functional binding to SWI/SNF complex. In liver, regulates gluconeogenesis and lipogenesis through different mechanisms. To regulate gluconeogenesis, functionally cooperates with FOXO1 binding to IRE-controlled promoters and regulating the expression of target genes such as PCK1 or G6PC1. To modulate lipogenesis, interacts and transcriptionally synergizes with SREBF1 in promoter activation of specific lipogenic target genes such as ACAS2. In adipose tissue, seems to act as FOXO1 coactivator accessing to ADIPOQ promoter through FOXO1 binding sites. Functionally, can act as dominant-negative. Binds DNA and have transctivation activity, even if much less efficiently than isoform 2. Does not inhibit cell proliferation. Its function is as follows. Directly and specifically enhances ribosomal DNA transcription interacting with RNA polymerase I-specific cofactors and inducing histone acetylation. The chain is CCAAT/enhancer-binding protein alpha from Homo sapiens (Human).